The following is a 172-amino-acid chain: S-ribosylhomocysteine lyase (172 aa).

The Fe cation site is built by H54, H58, and C128.

The protein belongs to the LuxS family. Homodimer. Fe cation serves as cofactor.

The enzyme catalyses S-(5-deoxy-D-ribos-5-yl)-L-homocysteine = (S)-4,5-dihydroxypentane-2,3-dione + L-homocysteine. In terms of biological role, involved in the synthesis of autoinducer 2 (AI-2) which is secreted by bacteria and is used to communicate both the cell density and the metabolic potential of the environment. The regulation of gene expression in response to changes in cell density is called quorum sensing. Catalyzes the transformation of S-ribosylhomocysteine (RHC) to homocysteine (HC) and 4,5-dihydroxy-2,3-pentadione (DPD). This Vibrio vulnificus (strain CMCP6) protein is S-ribosylhomocysteine lyase.